The sequence spans 269 residues: Ice-binding protein (269 aa).

A signal peptide spans 1–24 (MLKINRKYAIILAIVAFSSFQTEA). 7 consecutive short sequence motifs (probable ice-binding motif (T/S-X-T)) follow at residues 45–47 (TVT), 65–67 (SAT), 128–130 (SAQ), 154–156 (TLT), 180–182 (SAT), 198–200 (SIT), and 218–220 (AVT). A PEP C-terminal anchor region spans residues 240-263 (VPEPDSSLAVLGSGLVSLLFAFRK). A helical membrane pass occupies residues 245 to 261 (SSLAVLGSGLVSLLFAF).

This sequence belongs to the ice-binding protein family.

It localises to the cell outer membrane. A probable ice-binding protein that has ice-structuring activities in vitro. Thought not to anchor the cyanobacterium to ice surfaces, as its habitat is shallow puddles fed by glacier meltwater. In Nostoc sp. (strain HG1), this protein is Ice-binding protein.